The primary structure comprises 159 residues: Ribosomal RNA large subunit methyltransferase H (159 aa).

Residues Ile76, Gly108, and 127–132 each bind S-adenosyl-L-methionine; that span reads FSKMTF.

This sequence belongs to the RNA methyltransferase RlmH family. In terms of assembly, homodimer.

The protein localises to the cytoplasm. It carries out the reaction pseudouridine(1915) in 23S rRNA + S-adenosyl-L-methionine = N(3)-methylpseudouridine(1915) in 23S rRNA + S-adenosyl-L-homocysteine + H(+). Functionally, specifically methylates the pseudouridine at position 1915 (m3Psi1915) in 23S rRNA. The sequence is that of Ribosomal RNA large subunit methyltransferase H from Clostridium botulinum (strain Loch Maree / Type A3).